The primary structure comprises 260 residues: Late transcription factor 1 (260 aa).

This sequence belongs to the chordopoxvirinae VLTF-1 family. Interacts with the late transcription factors VLTF-2 and VLTF-3. Interacts with the late transcription elongation factor VLTF-4. Interacts with itself.

Functionally, associates with RNA polymerase to initiate transcription from late gene promoters. The polypeptide is Late transcription factor 1 (OPG093) (Homo sapiens (Human)).